A 476-amino-acid polypeptide reads, in one-letter code: Serine/threonine-protein kinase WAG1 (476 aa).

The region spanning 93-400 is the Protein kinase domain; the sequence is FKLVRHLGTG…AQDIKRHEFF (308 aa). Residues 99 to 107 and Lys124 contribute to the ATP site; that span reads LGTGNLGRV. The active-site Proton acceptor is Asp219.

It belongs to the protein kinase superfamily. Ser/Thr protein kinase family. As to expression, expressed in root tips and lateral root primordia.

It is found in the cytoplasm. The protein localises to the cytosol. The enzyme catalyses L-seryl-[protein] + ATP = O-phospho-L-seryl-[protein] + ADP + H(+). It catalyses the reaction L-threonyl-[protein] + ATP = O-phospho-L-threonyl-[protein] + ADP + H(+). Serine/threonine-protein kinase involved in the regulation of auxin signaling. Acts as a positive regulator of cellular auxin efflux and regulates organ development by enhancing PIN-mediated polar auxin transport. Phosphorylates conserved serine residues in the PIN auxin efflux carriers. Phosphorylation of PIN proteins is required and sufficient for apical-basal PIN polarity that enables directional intercellular auxin fluxes, which mediate differential growth, tissue patterning and organogenesis. Acts as a suppressor of root waving. The polypeptide is Serine/threonine-protein kinase WAG1 (WAG1) (Arabidopsis thaliana (Mouse-ear cress)).